The sequence spans 100 residues: Large ribosomal subunit protein uL23 (100 aa).

This sequence belongs to the universal ribosomal protein uL23 family. In terms of assembly, part of the 50S ribosomal subunit. Contacts protein L29, and trigger factor when it is bound to the ribosome.

Functionally, one of the early assembly proteins it binds 23S rRNA. One of the proteins that surrounds the polypeptide exit tunnel on the outside of the ribosome. Forms the main docking site for trigger factor binding to the ribosome. The chain is Large ribosomal subunit protein uL23 from Pseudoalteromonas translucida (strain TAC 125).